The sequence spans 389 residues: Protein OSCP1 (389 aa).

As to expression, expressed predominantly in testis, also found in placenta and to a lesser extent in thymus and small intestine; abundantly expressed in tumor-derived cell lines. Ubiquitously expressed.

The protein localises to the basal cell membrane. Functionally, may be involved in drug clearance in the placenta. This is Protein OSCP1 (OSCP1) from Homo sapiens (Human).